The following is a 546-amino-acid chain: Cytochrome P450 monooxygenase alnH (546 aa).

The helical transmembrane segment at valine 11–isoleucine 31 threads the bilayer. 3 N-linked (GlcNAc...) asparagine glycosylation sites follow: asparagine 146, asparagine 258, and asparagine 425. A heme-binding site is contributed by cysteine 445.

The protein belongs to the cytochrome P450 family. Heme is required as a cofactor.

The protein resides in the membrane. Its pathway is polyketide biosynthesis. In terms of biological role, cytochrome P450 monooxygenase; part of the gene cluster that mediates the biosynthesis of asperlin, a polyketide showing anti-inflammatory, antitumor and antibiotic activities. The first step of the asperlin biosynthesis is the production of the intermediate 2,4,6-octatrienoic acid by the highly redusing polyketide synthase alnA with cleavage of the PKS product by the esterase alnB. 2,4,6-octatrienoic acid is further converted to asperlin via several steps involving the remaining enzymes from the cluster. The polypeptide is Cytochrome P450 monooxygenase alnH (Emericella nidulans (strain FGSC A4 / ATCC 38163 / CBS 112.46 / NRRL 194 / M139) (Aspergillus nidulans)).